The sequence spans 275 residues: 4-hydroxy-3-methylbut-2-enyl diphosphate reductase (275 aa).

Position 12 (Cys12) interacts with [4Fe-4S] cluster. (2E)-4-hydroxy-3-methylbut-2-enyl diphosphate is bound by residues His36 and His70. Dimethylallyl diphosphate contacts are provided by His36 and His70. Isopentenyl diphosphate contacts are provided by His36 and His70. Cys92 serves as a coordination point for [4Fe-4S] cluster. A (2E)-4-hydroxy-3-methylbut-2-enyl diphosphate-binding site is contributed by His120. Residue His120 participates in dimethylallyl diphosphate binding. Residue His120 coordinates isopentenyl diphosphate. Residue Glu122 is the Proton donor of the active site. A (2E)-4-hydroxy-3-methylbut-2-enyl diphosphate-binding site is contributed by Thr158. Cys186 contacts [4Fe-4S] cluster. Ser214, Ser215, Asn216, and Ser258 together coordinate (2E)-4-hydroxy-3-methylbut-2-enyl diphosphate. Dimethylallyl diphosphate contacts are provided by Ser214, Ser215, Asn216, and Ser258. Ser214, Ser215, Asn216, and Ser258 together coordinate isopentenyl diphosphate.

The protein belongs to the IspH family. [4Fe-4S] cluster is required as a cofactor.

It carries out the reaction isopentenyl diphosphate + 2 oxidized [2Fe-2S]-[ferredoxin] + H2O = (2E)-4-hydroxy-3-methylbut-2-enyl diphosphate + 2 reduced [2Fe-2S]-[ferredoxin] + 2 H(+). It catalyses the reaction dimethylallyl diphosphate + 2 oxidized [2Fe-2S]-[ferredoxin] + H2O = (2E)-4-hydroxy-3-methylbut-2-enyl diphosphate + 2 reduced [2Fe-2S]-[ferredoxin] + 2 H(+). It functions in the pathway isoprenoid biosynthesis; dimethylallyl diphosphate biosynthesis; dimethylallyl diphosphate from (2E)-4-hydroxy-3-methylbutenyl diphosphate: step 1/1. It participates in isoprenoid biosynthesis; isopentenyl diphosphate biosynthesis via DXP pathway; isopentenyl diphosphate from 1-deoxy-D-xylulose 5-phosphate: step 6/6. Functionally, catalyzes the conversion of 1-hydroxy-2-methyl-2-(E)-butenyl 4-diphosphate (HMBPP) into a mixture of isopentenyl diphosphate (IPP) and dimethylallyl diphosphate (DMAPP). Acts in the terminal step of the DOXP/MEP pathway for isoprenoid precursor biosynthesis. This Sulfurimonas denitrificans (strain ATCC 33889 / DSM 1251) (Thiomicrospira denitrificans (strain ATCC 33889 / DSM 1251)) protein is 4-hydroxy-3-methylbut-2-enyl diphosphate reductase.